Reading from the N-terminus, the 936-residue chain is E3 ubiquitin-protein ligase ZNRF3 (936 aa).

Residues 1–31 (MRPRSGGRPGATGRRRRRLRRRPRGLRCSRL) are disordered. The signal sequence occupies residues 1-55 (MRPRSGGRPGATGRRRRRLRRRPRGLRCSRLPPPPPLPLLLGLLLAAAGPGAARA). The segment covering 13–27 (GRRRRRLRRRPRGLR) has biased composition (basic residues). Topologically, residues 56-219 (KETAFVEVVL…PRQPTEYFDM (164 aa)) are extracellular. A helical transmembrane segment spans residues 220–240 (GIFLAFFVVVSLVCLILLVKI). At 241-936 (KLKQRRSQNS…HSADSSSPGA (696 aa)) the chain is on the cytoplasmic side. The RING-type; atypical zinc finger occupies 293-334 (CAICLEKYIDGEELRVIPCTHRFHRKCVDPWLLQHHTCPHCR). Disordered regions lie at residues 608-693 (SEAG…SPGA), 739-758 (LYEGSGPAGGEPQSGSSQGL), 849-875 (THSLGSWGGTRGPDTPRPHRGLGATRE), and 892-936 (CPPE…SPGA). A compositionally biased stretch (polar residues) spans 654 to 684 (SGDQVSTCSLEMNYSSNSSLEHRGPNSSTSE). The span at 913 to 922 (ESSTTATEAA) shows a compositional bias: low complexity.

The protein belongs to the ZNRF3 family. In terms of assembly, interacts with LRP6, FZD4, FZD5, FZD6 and FZD8. Interacts with RSPO1; interaction promotes indirect interaction with LGR4 and membrane clearance of ZNRF3. Also interacts with RSPO2. Interacts with LMBR1L.

It is found in the cell membrane. The enzyme catalyses S-ubiquitinyl-[E2 ubiquitin-conjugating enzyme]-L-cysteine + [acceptor protein]-L-lysine = [E2 ubiquitin-conjugating enzyme]-L-cysteine + N(6)-ubiquitinyl-[acceptor protein]-L-lysine.. It participates in protein modification; protein ubiquitination. With respect to regulation, negatively regulated by R-spondin proteins such as RSPO1: interaction with RSPO1 induces the indirect association between ZNRF3 and LGR4, promoting membrane clearance of ZNRF3. E3 ubiquitin-protein ligase that acts as a negative regulator of the Wnt signaling pathway by mediating the ubiquitination and subsequent degradation of Wnt receptor complex components Frizzled and LRP6. Acts on both canonical and non-canonical Wnt signaling pathway. Acts as a tumor suppressor in the intestinal stem cell zone by inhibiting the Wnt signaling pathway, thereby restricting the size of the intestinal stem cell zone. Along with RSPO2 and RNF43, constitutes a master switch that governs limb specification. The polypeptide is E3 ubiquitin-protein ligase ZNRF3 (ZNRF3) (Homo sapiens (Human)).